The primary structure comprises 290 residues: Sodium/potassium-transporting ATPase subunit beta-2 (290 aa).

The Cytoplasmic portion of the chain corresponds to 1–39 (MVIQKEKKSCGQVVEEWKEFVWNPRTHQFMGRTGTSWAF). The helical; Signal-anchor for type II membrane protein transmembrane segment at 40–67 (ILLFYLVFYGFLTAMFTLTMWVMLQTVS) threads the bilayer. The Extracellular segment spans residues 68 to 290 (DHTPKYQDRL…VAFKLRINKT (223 aa)). Residues Asn-96 and Asn-118 are each glycosylated (N-linked (GlcNAc...) asparagine). Residues Cys-129 and Cys-150 are joined by a disulfide bond. An N-linked (GlcNAc...) asparagine glycan is attached at Asn-153. The cysteines at positions 160 and 177 are disulfide-linked. N-linked (GlcNAc...) asparagine glycans are attached at residues Asn-193, Asn-197, and Asn-238. Positions 193–289 (NQSMNVTCVG…RVAFKLRINK (97 aa)) are immunoglobulin-like. A disulfide bond links Cys-200 and Cys-261.

The protein belongs to the X(+)/potassium ATPases subunit beta family. As to quaternary structure, the sodium/potassium-transporting ATPase is composed of a catalytic alpha subunit, an auxiliary non-catalytic beta subunit and an additional regulatory subunit. Interacts with BSG.

Its subcellular location is the cell membrane. This is the non-catalytic component of the active enzyme, which catalyzes the hydrolysis of ATP coupled with the exchange of Na(+) and K(+) ions across the plasma membrane. The exact function of the beta-2 subunit is not known. Functionally, mediates cell adhesion of neurons and astrocytes, and promotes neurite outgrowth. In Bos taurus (Bovine), this protein is Sodium/potassium-transporting ATPase subunit beta-2 (ATP1B2).